We begin with the raw amino-acid sequence, 199 residues long: MSHHDGENEGTSADSGYDDFVILLDDDGNHIGTAPRATVHSQHTPRHLAFSCHVLDVGGRVLVTRRALTKVAWPGVWTNTCCGHPRVGETIIDAAVRRTHQELGLDLDPRRMRVVLPDFSYRATDSGGIVEDEFCPVVVARLSLPEELVELNPDPDEVEEVAWVGWQDMYDLARSMPALLSPWAVEQMLEFGPDLPVVR.

Mn(2+)-binding residues include His-40 and His-47. A Nudix hydrolase domain is found at 45–186; it reads PRHLAFSCHV…PALLSPWAVE (142 aa). Cys-82 is a catalytic residue. Position 82 (Cys-82) interacts with Mg(2+). His-84 contacts Mn(2+). Glu-102 is a binding site for Mg(2+). Mn(2+)-binding residues include Glu-131 and Glu-133. The active site involves Glu-133.

This sequence belongs to the IPP isomerase type 1 family. The cofactor is Mg(2+). It depends on Mn(2+) as a cofactor.

Its subcellular location is the cytoplasm. The catalysed reaction is isopentenyl diphosphate = dimethylallyl diphosphate. The protein operates within isoprenoid biosynthesis; dimethylallyl diphosphate biosynthesis; dimethylallyl diphosphate from isopentenyl diphosphate: step 1/1. In terms of biological role, catalyzes the 1,3-allylic rearrangement of the homoallylic substrate isopentenyl (IPP) to its highly electrophilic allylic isomer, dimethylallyl diphosphate (DMAPP). The protein is Isopentenyl-diphosphate Delta-isomerase of Cutibacterium acnes (strain DSM 16379 / KPA171202) (Propionibacterium acnes).